The sequence spans 203 residues: Cold-regulated 413 plasma membrane protein 2 (203 aa).

Residues 1-43 are Extracellular-facing; it reads MGRMDYLAMKTDDVDTVALVNSDMEELKVAAKKLFSDVSKLGG. A helical membrane pass occupies residues 44 to 64; sequence LGFGVSFLKFLASFAAIYLLI. The Cytoplasmic segment spans residues 65 to 74; it reads LDRTNWKTKM. A helical transmembrane segment spans residues 75-95; it reads LTSLLIPYIFLSLPSVIFNFL. Topologically, residues 96–98 are extracellular; sequence SGD. Residues 99–119 traverse the membrane as a helical segment; it reads VGKWIAFVAVVLRLFFPKHFP. A topological domain (cytoplasmic) is located at residue aspartate 120. A helical transmembrane segment spans residues 121–141; sequence WLEMPGSLILLLVVSPHFLAH. Residues 142 to 144 are Extracellular-facing; it reads HIR. Residues 145–165 form a helical membrane-spanning segment; it reads GTWIGTVISLFIGCYLLQEHI. The Cytoplasmic portion of the chain corresponds to 166–179; the sequence is RASGGFRNSFTQPR. A helical transmembrane segment spans residues 180–200; that stretch reads GVSNTLGIILLLVYPVWALIV. The Extracellular segment spans residues 201-203; the sequence is RVM.

It belongs to the Cold-regulated 413 protein family.

The protein resides in the cell membrane. In Arabidopsis thaliana (Mouse-ear cress), this protein is Cold-regulated 413 plasma membrane protein 2 (COR413PM2).